The following is a 176-amino-acid chain: Inner membrane-spanning protein YciB (176 aa).

Transmembrane regions (helical) follow at residues Phe3 to Phe23, Thr24 to His44, Thr49 to His69, Lys72 to Ala92, Leu121 to Phe141, and Phe149 to Leu169.

The protein belongs to the YciB family.

It localises to the cell inner membrane. Functionally, plays a role in cell envelope biogenesis, maintenance of cell envelope integrity and membrane homeostasis. This is Inner membrane-spanning protein YciB from Burkholderia cenocepacia (strain ATCC BAA-245 / DSM 16553 / LMG 16656 / NCTC 13227 / J2315 / CF5610) (Burkholderia cepacia (strain J2315)).